The sequence spans 210 residues: Putative 3-methyladenine DNA glycosylase (210 aa).

It belongs to the DNA glycosylase MPG family.

In Lactobacillus acidophilus (strain ATCC 700396 / NCK56 / N2 / NCFM), this protein is Putative 3-methyladenine DNA glycosylase.